The following is a 314-amino-acid chain: Methionyl-tRNA formyltransferase (314 aa).

108-111 (SLLP) contacts (6S)-5,6,7,8-tetrahydrofolate.

This sequence belongs to the Fmt family.

It carries out the reaction L-methionyl-tRNA(fMet) + (6R)-10-formyltetrahydrofolate = N-formyl-L-methionyl-tRNA(fMet) + (6S)-5,6,7,8-tetrahydrofolate + H(+). Its function is as follows. Attaches a formyl group to the free amino group of methionyl-tRNA(fMet). The formyl group appears to play a dual role in the initiator identity of N-formylmethionyl-tRNA by promoting its recognition by IF2 and preventing the misappropriation of this tRNA by the elongation apparatus. This is Methionyl-tRNA formyltransferase from Akkermansia muciniphila (strain ATCC BAA-835 / DSM 22959 / JCM 33894 / BCRC 81048 / CCUG 64013 / CIP 107961 / Muc).